Reading from the N-terminus, the 902-residue chain is 26S proteasome regulatory subunit rpn-1 (902 aa).

Basic and acidic residues predominate over residues methionine 1 to glutamate 41. Residues methionine 1–glutamine 54 form a disordered region. Residues glutamine 42–aspartate 52 show a composition bias toward acidic residues. 8 PC repeats span residues serine 415–alanine 448, glycine 449–valine 487, alanine 488–valine 522, methionine 525–leucine 559, alanine 568–alanine 601, alanine 645–arginine 680, alanine 681–isoleucine 715, and asparagine 716–serine 750.

It belongs to the proteasome subunit S2 family.

Acts as a regulatory subunit of the 26 proteasome which is involved in the ATP-dependent degradation of ubiquitinated proteins. The sequence is that of 26S proteasome regulatory subunit rpn-1 (rpn-1) from Neurospora crassa (strain ATCC 24698 / 74-OR23-1A / CBS 708.71 / DSM 1257 / FGSC 987).